Here is a 278-residue protein sequence, read N- to C-terminus: Leucine-rich repeat-containing protein 10 (278 aa).

LRR repeat units lie at residues 30–51, 52–74, 76–97, 98–121, 123–143, 144–166, 167–189, and 191–213; these read LDRM…VCSF, QELV…LGQL, NLQI…VCTL, KQLC…SLLQ, LRTL…VCEL, SLLK…LQRL, RELR…LLHM, and FLEI…HLSS. Residues 239 to 250 are compositionally biased toward basic and acidic residues; that stretch reads RWAEETPEPDPR. Residues 239 to 278 are disordered; the sequence is RWAEETPEPDPRKARRYALAREESQEAQLPALPPLPPTNS. The span at 269–278 shows a compositional bias: pro residues; sequence ALPPLPPTNS.

Its subcellular location is the nucleus. Its function is as follows. May play important roles in cardiac development and/or cardiac function. This Bos taurus (Bovine) protein is Leucine-rich repeat-containing protein 10 (LRRC10).